Reading from the N-terminus, the 302-residue chain is ATP synthase gamma chain, sodium ion specific (302 aa).

The protein belongs to the ATPase gamma chain family. F-type ATPases have 2 components, CF(1) - the catalytic core - and CF(0) - the membrane proton channel. CF(1) has five subunits: alpha(3), beta(3), gamma(1), delta(1), epsilon(1). CF(0) has three main subunits: a, b and c.

It localises to the cell membrane. With respect to regulation, inhibited by nitrate. Its function is as follows. Produces ATP from ADP in the presence of a proton gradient across the membrane. The gamma chain is believed to be important in regulating ATPase activity and the flow of protons through the CF(0) complex. This is ATP synthase gamma chain, sodium ion specific (atpG) from Acetobacterium woodii (strain ATCC 29683 / DSM 1030 / JCM 2381 / KCTC 1655 / WB1).